Consider the following 147-residue polypeptide: Large ribosomal subunit protein bL9 (147 aa).

The protein belongs to the bacterial ribosomal protein bL9 family.

Its function is as follows. Binds to the 23S rRNA. The protein is Large ribosomal subunit protein bL9 of Mesoplasma florum (strain ATCC 33453 / NBRC 100688 / NCTC 11704 / L1) (Acholeplasma florum).